The following is a 309-amino-acid chain: CDK-activating kinase assembly factor MAT1 (309 aa).

The residue at position 1 (Met-1) is an N-acetylmethionine. Residues 6 to 50 (CPRCKTTKYRNPSLKLMVNVCGHTLCESCVDLLFVRGAGNCPECG) form an RING-type zinc finger. Phosphothreonine is present on Thr-51. A UIM domain is found at 142–161 (REQEELEEALEVERQEHEQR). Phosphoserine is present on Ser-279.

As to quaternary structure, associates primarily with CDK7 and cyclin H to form the CAK complex. CAK can further associate with the core-TFIIH to form the TFIIH basal transcription factor.

The protein resides in the nucleus. In terms of biological role, stabilizes the cyclin H-CDK7 complex to form a functional CDK-activating kinase (CAK) enzymatic complex. CAK activates the cyclin-associated kinases CDK1, CDK2, CDK4 and CDK6 by threonine phosphorylation. CAK complexed to the core-TFIIH basal transcription factor activates RNA polymerase II by serine phosphorylation of the repetitive C-terminal domain (CTD) of its large subunit (POLR2A), allowing its escape from the promoter and elongation of the transcripts. Involved in cell cycle control and in RNA transcription by RNA polymerase II. In Mus musculus (Mouse), this protein is CDK-activating kinase assembly factor MAT1 (Mnat1).